Reading from the N-terminus, the 220-residue chain is Large ribosomal subunit protein uL3 (220 aa).

The segment at 137–159 is disordered; that stretch reads GASHGAHKNHRKPGSIGGASTPS.

Belongs to the universal ribosomal protein uL3 family. Part of the 50S ribosomal subunit. Forms a cluster with proteins L14 and L19.

One of the primary rRNA binding proteins, it binds directly near the 3'-end of the 23S rRNA, where it nucleates assembly of the 50S subunit. The protein is Large ribosomal subunit protein uL3 of Renibacterium salmoninarum (strain ATCC 33209 / DSM 20767 / JCM 11484 / NBRC 15589 / NCIMB 2235).